Reading from the N-terminus, the 362-residue chain is 3-dehydroquinate synthase (362 aa).

Residues 72-77 (SGEQAK), 106-110 (GVVGD), 130-131 (TT), K142, and K151 each bind NAD(+). Zn(2+) contacts are provided by E184, H246, and H263.

It belongs to the sugar phosphate cyclases superfamily. Dehydroquinate synthase family. It depends on NAD(+) as a cofactor. Co(2+) serves as cofactor. Requires Zn(2+) as cofactor.

The protein localises to the cytoplasm. The catalysed reaction is 7-phospho-2-dehydro-3-deoxy-D-arabino-heptonate = 3-dehydroquinate + phosphate. Its pathway is metabolic intermediate biosynthesis; chorismate biosynthesis; chorismate from D-erythrose 4-phosphate and phosphoenolpyruvate: step 2/7. Its function is as follows. Catalyzes the conversion of 3-deoxy-D-arabino-heptulosonate 7-phosphate (DAHP) to dehydroquinate (DHQ). This is 3-dehydroquinate synthase from Bacillus subtilis (strain 168).